We begin with the raw amino-acid sequence, 334 residues long: D-fructose 1,6-bisphosphatase class 2/sedoheptulose 1,7-bisphosphatase (334 aa).

Mn(2+) is bound by residues Asp-33, Glu-57, Asp-85, and Glu-88. Residues 88-90 (EGT), Tyr-119, 164-166 (RAR), and 186-188 (DGD) contribute to the substrate site. Mn(2+) is bound at residue Glu-213.

Belongs to the FBPase class 2 family. In terms of assembly, homotetramer. The cofactor is Mn(2+).

It carries out the reaction beta-D-fructose 1,6-bisphosphate + H2O = beta-D-fructose 6-phosphate + phosphate. The catalysed reaction is D-sedoheptulose 1,7-bisphosphate + H2O = D-sedoheptulose 7-phosphate + phosphate. It participates in carbohydrate biosynthesis; Calvin cycle. Its function is as follows. Catalyzes the hydrolysis of fructose 1,6-bisphosphate (Fru 1,6-P2) and sedoheptulose 1,7-bisphosphate (Sed 1,7-P2) to fructose 6-phosphate and sedoheptulose 7-phosphate, respectively. In Synechococcus sp. (strain CC9605), this protein is D-fructose 1,6-bisphosphatase class 2/sedoheptulose 1,7-bisphosphatase.